A 424-amino-acid polypeptide reads, in one-letter code: MDDRLSSQLERYASQVTASATLIIRHLKSLKDEPSTLPSQTSVPTAVGTAQLRLAEAAFQLLHFTRDPGNVLTQLTVDLQVISAVRWLLHFEIFSLVPLEGSISYHELSSVANVPENLLRSHIRLAMTCHLFQESGPIGMVAHSPVSCQLASDPSLVSWGQYFANSVFPTATKNVNATAAWPGSKALNETAHNLAFNHHGSFFDYVSQDPARTVEFANSMKAVSTTSLFDTCHLCKSFDWSSLGDGVVVDMGGSTGHVSIALAESFPSLRFVVQDLPDVVSNSIRQLEERQLPLSVTTRIQFQGHSLLHMQPVKGAAVYLLRQILHDWPDREAVQILRSIVPALGPRSKIFIADIVLPEAGSIPATEEQVMRCNDLLLHQFTNTLERTLEDWQAIVSRVSDNLRIQHVYRDPGSILSLLVIETV.

D275 lines the S-adenosyl-L-methionine pocket. H326 serves as the catalytic Proton acceptor.

This sequence belongs to the class I-like SAM-binding methyltransferase superfamily. Cation-independent O-methyltransferase family.

Its pathway is secondary metabolite biosynthesis. Its function is as follows. O-methyltransferase; part of the gene cluster that mediates the biosynthesis of aurasperone B, a dimeric gamma-naphthopyrone. The first step in the biosynthesis of aurasperone B is the production of gamma-naphthopyrone precursor YWA1 by the non-reducing polyketide synthase albA, via condensation of one acetyl-CoA starter unit with 6 malonyl-CoA units. YWA1 is then methylated by aunE at position C-6 to yield foncesin which is further methylated at position C-8 by aunD to produce fonsecin B. A key enzyme in the biosynthetic pathway is the cytochrome P450 monooxygenase aunB which catalyzes the oxidative dimerization of fonsecin B to aurasperone B. AunB also catalyzes the oxidative dimerization of rubrofusarin B into aurasperone A. This is O-methyltransferase aunD from Aspergillus niger (strain ATCC 1015 / CBS 113.46 / FGSC A1144 / LSHB Ac4 / NCTC 3858a / NRRL 328 / USDA 3528.7).